Consider the following 294-residue polypeptide: Bifunctional protein FolD (294 aa).

Residues 166 to 168 (GRS), S191, and I232 each bind NADP(+).

Belongs to the tetrahydrofolate dehydrogenase/cyclohydrolase family. In terms of assembly, homodimer.

It catalyses the reaction (6R)-5,10-methylene-5,6,7,8-tetrahydrofolate + NADP(+) = (6R)-5,10-methenyltetrahydrofolate + NADPH. The catalysed reaction is (6R)-5,10-methenyltetrahydrofolate + H2O = (6R)-10-formyltetrahydrofolate + H(+). The protein operates within one-carbon metabolism; tetrahydrofolate interconversion. Its function is as follows. Catalyzes the oxidation of 5,10-methylenetetrahydrofolate to 5,10-methenyltetrahydrofolate and then the hydrolysis of 5,10-methenyltetrahydrofolate to 10-formyltetrahydrofolate. The chain is Bifunctional protein FolD from Bradyrhizobium diazoefficiens (strain JCM 10833 / BCRC 13528 / IAM 13628 / NBRC 14792 / USDA 110).